The sequence spans 574 residues: Lysyl oxidase homolog 1 (574 aa).

The signal sequence occupies residues 1–25 (MALARGSRQLGALVWGACLCVLVHG). The propeptide occupies 26-95 (QQAQPGQGSD…RRSHGSPRRR (70 aa)). 2 disordered regions span residues 62 to 123 (VPAG…GFGQ) and 239 to 374 (GGEE…DLVP). Residues 86–96 (RRSHGSPRRRQ) show a composition bias toward basic residues. Composition is skewed to pro residues over residues 255–268 (PERP…PPPD) and 313–332 (YANP…PPYL). The tract at residues 311–369 (PPYANPPPEAYGPPRALEPPYLPVRSSDTPPPGGERNGAQQGRLSVGSVYRPNQNGRGL) is interaction with FBLN5. Residues 370-574 (PDLVPDPNYV…SATNCKIVQS (205 aa)) form a lysyl-oxidase like region. Cystine bridges form between C395–C401, C448–C497, C481–C487, C508–C518, and C555–C569. Cu cation contacts are provided by H449, H451, and H453. The segment at residues 477–512 (KASFCLEDSTCDFGNLKRYACTSHTQGLSPGCYDTY) is a cross-link (lysine tyrosylquinone (Lys-Tyr); alternate). Residue Y512 is modified to 2',4',5'-topaquinone; alternate.

The protein belongs to the lysyl oxidase family. As to quaternary structure, interacts (via propeptide) with EFEMP2. Interacts with FBLN5. It depends on Cu cation as a cofactor. Requires lysine tyrosylquinone residue as cofactor. The lysine tyrosylquinone cross-link (LTQ) is generated by condensation of the epsilon-amino group of a lysine with a topaquinone produced by oxidation of tyrosine. In terms of processing, proteolytic processing by a furin-like protease causes removal of N-terminal propeptide resulting in an enzyme largely inactive, but further proteolytic processing by BMP1 results in enzyme activation. In terms of tissue distribution, expressed in ocular tissues including the iris, ciliary body, lens and optic nerve. Not detected in the retina.

Its subcellular location is the secreted. It is found in the extracellular space. The protein localises to the extracellular matrix. The catalysed reaction is L-lysyl-[protein] + O2 + H2O = (S)-2-amino-6-oxohexanoyl-[protein] + H2O2 + NH4(+). In terms of biological role, catalyzes the oxidative deamination of lysine and hydroxylysine residues in collagen and elastin, resulting in the formation of covalent cross-linkages, and the stabilization of collagen and elastin fibers. Essential for the elastic fiber homeostasis and for their maintenance at adult age. This is Lysyl oxidase homolog 1 (LOXL1) from Homo sapiens (Human).